Here is a 619-residue protein sequence, read N- to C-terminus: Mitogen-activated protein kinase kinase kinase 2 (619 aa).

Disordered regions lie at residues 25–44 (LSLQETRKAKPSSPKKQNDV), 126–168 (QATN…PPPG), 201–245 (LDPL…DNHQ), and 289–355 (RTQG…APTN). The residue at position 26 (S26) is a Phosphoserine. Residues 43–122 (DVRVKFEHRG…KSLKILLVVN (80 aa)) form the PB1 domain. Residues 126 to 143 (QATNLEPSPSPEDLNNTP) show a composition bias toward polar residues. Phosphoserine occurs at positions 153 and 164. Residues 203–219 (PLSLSSPENSGSGSCPS) are compositionally biased toward low complexity. Phosphoserine is present on residues S239, S297, S311, S331, S344, and S349. A compositionally biased stretch (polar residues) spans 290–299 (TQGTSFRSPV). Positions 300 to 315 (SFSPTDHSLSTSSGSS) are enriched in low complexity. Positions 322-332 (DDSRIRRRGSD) are enriched in basic and acidic residues. The span at 336–346 (PTLTVTDISPP) shows a compositional bias: polar residues. Positions 356-616 (WRLGKLLGQG…AEELLRHMFV (261 aa)) constitute a Protein kinase domain. ATP contacts are provided by residues 362-370 (LGQGAFGRV) and K385. The active-site Proton acceptor is the D483.

The protein belongs to the protein kinase superfamily. STE Ser/Thr protein kinase family. MAP kinase kinase kinase subfamily. In terms of assembly, self-associates. Binds both upstream activators and downstream substrates in multimolecular complexes. Interacts (via the kinase catalytic domain) with STK38. Interacts with XIAP/BIRC4. Mg(2+) is required as a cofactor. Ubiquitination by XIAP/BIRC4 does not lead to proteasomal degradation. In terms of processing, autophosphorylated.

The protein resides in the cytoplasm. It is found in the nucleus. It catalyses the reaction L-seryl-[protein] + ATP = O-phospho-L-seryl-[protein] + ADP + H(+). It carries out the reaction L-threonyl-[protein] + ATP = O-phospho-L-threonyl-[protein] + ADP + H(+). With respect to regulation, activated by phosphorylation on Thr-524. Interacts with PKN2; the interaction activates PKN2 kinase activity in a MAP3K2-independent kinase activity. Its function is as follows. Component of a protein kinase signal transduction cascade. Regulates the JNK and ERK5 pathways by phosphorylating and activating MAP2K5 and MAP2K7. Plays a role in caveolae kiss-and-run dynamics. The chain is Mitogen-activated protein kinase kinase kinase 2 (Map3k2) from Mus musculus (Mouse).